The sequence spans 378 residues: VDFNVPIKDGRITDSNRIQATLPSIQAVLDNGAKSLVLMSHLGRPDGRRDEKSSLRPVAEQLQTLLGRPVTFLEDCVGPEIESACADPAPGSVFLLENLRFHPEEEGAGVDESGNKFKPSQEQVQTFRDSLTRLGDVYINDAFGTAHRAHSSMAGINLPQRAAGYLMGKELEYFSRALENPNRPLLVIMGGAKVSDKIQLINNLLDNCNEMIIAGGMAFTFKKVLDNLEIGNSLFDEAGAKIVQGIIDKAAERHVQIHLPTDFVCGDKFETGCNVQTYSGNIPEGFMGLDIGPELQEAMAQAIQRAETIVWNGPPGVFEIPEFRAGSERFFREIVAATRDRRVVSIVGGGDTAAFAKTMGDESDVISHISTGGGASDP.

(2R)-3-phosphoglycerate is bound by residues valine 1, aspartate 2, phenylalanine 3, asparagine 4, asparagine 16, arginine 17, serine 40, histidine 41, glycine 43, arginine 44, leucine 99, arginine 100, histidine 147, and arginine 148. Residue glycine 191 coordinates ADP. Glycine 191 contributes to the CDP binding site. 2 residues coordinate AMP: alanine 192 and lysine 193. Alanine 192 is a binding site for ATP. Mg(2+) is bound at residue alanine 192. Aspartate 196 is a binding site for CDP. A Mg(2+)-binding site is contributed by aspartate 196. Lysine 197 lines the AMP pocket. Lysine 197 provides a ligand contact to ATP. An ADP-binding site is contributed by glycine 215. Position 215 (glycine 215) interacts with CDP. Residues glycine 216 and glycine 288 each coordinate AMP. 2 residues coordinate ATP: glycine 216 and glycine 288. CDP is bound by residues glycine 313 and phenylalanine 318. Phenylalanine 318 lines the ADP pocket. Glutamate 319 lines the AMP pocket. Positions 319, 351, and 352 each coordinate ATP. Aspartate 351 is a binding site for Mg(2+).

It belongs to the phosphoglycerate kinase family. As to quaternary structure, monomer. The cofactor is Mg(2+).

The enzyme catalyses (2R)-3-phosphoglycerate + ATP = (2R)-3-phospho-glyceroyl phosphate + ADP. The protein operates within carbohydrate degradation; glycolysis; pyruvate from D-glyceraldehyde 3-phosphate: step 2/5. This chain is Phosphoglycerate kinase (PGK), found in Condylostoma magnum.